Reading from the N-terminus, the 324-residue chain is IDS-like terpene synthase 2 (324 aa).

Mg(2+)-binding residues include Asp-77 and Asp-81.

It belongs to the FPP/GGPP synthase family. Mg(2+) serves as cofactor.

The enzyme catalyses (2E)-geranyl diphosphate = (E)-beta-ocimene + diphosphate. It carries out the reaction (2E,6E)-farnesyl diphosphate = (3E,6E)-alpha-farnesene + diphosphate. It catalyses the reaction (2E,6E,10E)-geranylgeranyl diphosphate = (E,E,E)-alpha-springene + diphosphate. Terpene synthase that shows monoterpene synthase activity and produces (E)-beta-ocimene as a major product, using geranyl diphosphate (GPP) as substrate. Also shows sesquiterpene synthase activity as it is able to convert farnesyl diphosphate (FPP) into (E,E)-alpha-farnesene. Finally, TPS2 can convert geranylgeranyl diphosphate into (E,E,E)-alpha-springene. The protein is IDS-like terpene synthase 2 of Melampsora lini (Rust fungus).